The primary structure comprises 872 residues: Bifunctional uridylyltransferase/uridylyl-removing enzyme (872 aa).

Positions 1–332 (MALPNKVKKL…PKHHQPIIQE (332 aa)) are uridylyltransferase. Residues 333-691 (LDRNFERIGN…VSNKAMHGGT (359 aa)) are uridylyl-removing. The region spanning 450–572 (VDEHTHRLIN…VKTERQLDYL (123 aa)) is the HD domain. 2 ACT domains span residues 692 to 773 (QVFV…FKKN) and 799 to 872 (LIEI…AETE).

The protein belongs to the GlnD family. Mg(2+) serves as cofactor.

The enzyme catalyses [protein-PII]-L-tyrosine + UTP = [protein-PII]-uridylyl-L-tyrosine + diphosphate. It carries out the reaction [protein-PII]-uridylyl-L-tyrosine + H2O = [protein-PII]-L-tyrosine + UMP + H(+). Its activity is regulated as follows. Uridylyltransferase (UTase) activity is inhibited by glutamine, while glutamine activates uridylyl-removing (UR) activity. Functionally, modifies, by uridylylation and deuridylylation, the PII regulatory proteins (GlnB and homologs), in response to the nitrogen status of the cell that GlnD senses through the glutamine level. Under low glutamine levels, catalyzes the conversion of the PII proteins and UTP to PII-UMP and PPi, while under higher glutamine levels, GlnD hydrolyzes PII-UMP to PII and UMP (deuridylylation). Thus, controls uridylylation state and activity of the PII proteins, and plays an important role in the regulation of nitrogen assimilation and metabolism. This chain is Bifunctional uridylyltransferase/uridylyl-removing enzyme, found in Pseudoalteromonas translucida (strain TAC 125).